The chain runs to 570 residues: Urease subunit alpha (570 aa).

A Urease domain is found at 131–570 (GGFDSHIHFI…LPMAQRYFMY (440 aa)). The Ni(2+) site is built by histidine 136, histidine 138, and lysine 219. Lysine 219 is modified (N6-carboxylysine). Histidine 221 is a binding site for substrate. 2 residues coordinate Ni(2+): histidine 248 and histidine 274. Histidine 322 acts as the Proton donor in catalysis. Aspartate 362 is a binding site for Ni(2+).

The protein belongs to the metallo-dependent hydrolases superfamily. Urease alpha subunit family. Heterotrimer of UreA (gamma), UreB (beta) and UreC (alpha) subunits. Three heterotrimers associate to form the active enzyme. Ni cation is required as a cofactor. In terms of processing, carboxylation allows a single lysine to coordinate two nickel ions.

The protein localises to the cytoplasm. It carries out the reaction urea + 2 H2O + H(+) = hydrogencarbonate + 2 NH4(+). It functions in the pathway nitrogen metabolism; urea degradation; CO(2) and NH(3) from urea (urease route): step 1/1. This Rhodopseudomonas palustris (strain HaA2) protein is Urease subunit alpha.